The following is a 291-amino-acid chain: Light-independent protochlorophyllide reductase iron-sulfur ATP-binding protein (291 aa).

Residues 10–15 (GIGKST) and lysine 39 each bind ATP. Residue serine 14 coordinates Mg(2+). Residues cysteine 95 and cysteine 129 each contribute to the [4Fe-4S] cluster site. 180–181 (NR) lines the ATP pocket.

It belongs to the NifH/BchL/ChlL family. As to quaternary structure, homodimer. Protochlorophyllide reductase is composed of three subunits; ChlL, ChlN and ChlB. Requires [4Fe-4S] cluster as cofactor.

It is found in the plastid. The protein resides in the chloroplast. The catalysed reaction is chlorophyllide a + oxidized 2[4Fe-4S]-[ferredoxin] + 2 ADP + 2 phosphate = protochlorophyllide a + reduced 2[4Fe-4S]-[ferredoxin] + 2 ATP + 2 H2O. It participates in porphyrin-containing compound metabolism; chlorophyll biosynthesis (light-independent). Functionally, component of the dark-operative protochlorophyllide reductase (DPOR) that uses Mg-ATP and reduced ferredoxin to reduce ring D of protochlorophyllide (Pchlide) to form chlorophyllide a (Chlide). This reaction is light-independent. The L component serves as a unique electron donor to the NB-component of the complex, and binds Mg-ATP. This chain is Light-independent protochlorophyllide reductase iron-sulfur ATP-binding protein, found in Larix decidua (European larch).